Consider the following 126-residue polypeptide: Probable prefoldin subunit 4 (126 aa).

The protein belongs to the prefoldin subunit beta family. In terms of assembly, heterohexamer of two PFD-alpha type and four PFD-beta type subunits.

Functionally, binds specifically to cytosolic chaperonin (c-CPN) and transfers target proteins to it. Binds to nascent polypeptide chain and promotes folding in an environment in which there are many competing pathways for nonnative proteins. The sequence is that of Probable prefoldin subunit 4 (pfd-4) from Caenorhabditis elegans.